The following is a 761-amino-acid chain: MKKETQNLQCIPLVISVLSLFGVSSARKPPYLCNRVCGGISIPFPFGIGGKECYLNPWYEVVCNTTTSVPFLSRINRELVNIYLPDPTEYYSNGVVHIKGPVTSSGCSTGTSQPLTPQPLNVAGQGSPYFLTDKNLLMAVGCNVKAVMMDVKSQIIGCESSCDERNSSSQVVRNKICSGNKCCQTRIPEGQPQVIGVNIEIPENKNTTEGGCKVAFLTSNKYSSLNVTEPEEFHSDGYAVVELGWYFDTSDSRVLSPIGCMNVSDASQDGGYGSETICVCSYGYFSGFSYRSCYCNSMGYAGNPFLPGGCVDIDECKLEIGRKRCKDQSCVNKPGWFTCEPKKPGQIKPVFQGVLIGSALLLFAFGIFGLYKFIKKQRRSSRMRVFFRRNGGMLLKQQLARKEGNVEMSKIFSSNELEKATDNFNTNRVLGQGGQGTVYKGMLVDGRIVAVKRSKAMDEDKVEEFINEVVVLAQINHRNIVKLLGCCLETEVPVLVYEFVPNGDLCKRLRDECDDYIMTWEVRLHIAIEIAGALSYLHSAASFPIYHRDIKTTNILLDEKYQVKVSDFGTSRSVTIDQTHLTTQVAGTFGYVDPEYFQSSKFTDKSDVYSFGVVLVELITGKNPSSRVQSEENRGFAAHFVAAVKENRFLDIVDERIKDECNLDQVMAVAKLAKRCLNRKGKKRPNMREVSVELERIRSSSYKSEIHNDDDDDDDDDDEDDQAMELNIEETWDVGMTAPASMFNNGSPASDVEPLVPLRTW.

The signal sequence occupies residues 1 to 26; the sequence is MKKETQNLQCIPLVISVLSLFGVSSA. The Extracellular portion of the chain corresponds to 27 to 349; the sequence is RKPPYLCNRV…EPKKPGQIKP (323 aa). N-linked (GlcNAc...) asparagine glycans are attached at residues asparagine 64, asparagine 166, asparagine 206, asparagine 226, and asparagine 262. An atypical EGF-like region spans residues 278 to 339; sequence CVCSYGYFSG…CVNKPGWFTC (62 aa). Intrachain disulfides connect cysteine 280/cysteine 293, cysteine 316/cysteine 330, and cysteine 325/cysteine 339. Residues 350 to 370 form a helical membrane-spanning segment; that stretch reads VFQGVLIGSALLLFAFGIFGL. Residues 371–761 lie on the Cytoplasmic side of the membrane; it reads YKFIKKQRRS…VEPLVPLRTW (391 aa). Residues 424 to 697 enclose the Protein kinase domain; sequence FNTNRVLGQG…REVSVELERI (274 aa). Residues 430-438 and lysine 452 contribute to the ATP site; that span reads LGQGGQGTV. Residue tyrosine 497 is modified to Phosphotyrosine. Catalysis depends on aspartate 549, which acts as the Proton acceptor. Phosphothreonine is present on residues threonine 583 and threonine 588. Tyrosine 596 carries the phosphotyrosine modification. The tract at residues 701 to 761 is disordered; the sequence is SYKSEIHNDD…VEPLVPLRTW (61 aa). The span at 708–732 shows a compositional bias: acidic residues; the sequence is NDDDDDDDDDDEDDQAMELNIEETW.

Belongs to the protein kinase superfamily. Ser/Thr protein kinase family. Expressed in the whole plant. Detected in root-shoot junctions and lateral root initiation sites.

Its subcellular location is the membrane. It carries out the reaction L-seryl-[protein] + ATP = O-phospho-L-seryl-[protein] + ADP + H(+). The catalysed reaction is L-threonyl-[protein] + ATP = O-phospho-L-threonyl-[protein] + ADP + H(+). Its function is as follows. Serine/threonine-protein kinase that may function as a signaling receptor of extracellular matrix component. Plays a role in plant mineral nutrients response. The sequence is that of Wall-associated receptor kinase-like 4 (WAKL4) from Arabidopsis thaliana (Mouse-ear cress).